The following is a 582-amino-acid chain: Vesicular glutamate transporter 2 (582 aa).

Topologically, residues 1-71 (MESVKQRILT…CTCFGLPRRY (71 aa)) are cytoplasmic. Residues 72–92 (IIAIMSGLGFCISFGIRCNLG) form a helical membrane-spanning segment. Over 93 to 125 (VAIVDMVNNSTIHRGGKVIKEKAKFNWDPETVG) the chain is Vesicular. N-linked (GlcNAc...) asparagine glycosylation is found at asparagine 100 and asparagine 101. A helical membrane pass occupies residues 126 to 146 (MIHGSFFWGYIITQIPGGYIA). The Cytoplasmic segment spans residues 147–148 (SR). The chain crosses the membrane as a helical span at residues 149-169 (LAANRVFGAAILLTSTLNMLI). The Vesicular portion of the chain corresponds to 170-177 (PSAARVHY). The chain crosses the membrane as a helical span at residues 178–198 (GCVIFVRILQGLVEGVTYPAC). The Cytoplasmic segment spans residues 199-216 (HGIWSKWAPPLERSRLAT). Residues 217–237 (TSFCGSYAGAVIAMPLAGILV) traverse the membrane as a helical segment. Residues 238 to 244 (QYTGWSS) are Vesicular-facing. A helical transmembrane segment spans residues 245–265 (VFYVYGSFGMIWYMFWLLVSY). At 266–310 (ESPAKHPTITDEERRYIEESIGESANLLGAMEKFKTPWRKFFTSM) the chain is on the cytoplasmic side. Residues 311 to 331 (PVYAIIVANFCRSWTFYLLLI) traverse the membrane as a helical segment. The Vesicular portion of the chain corresponds to 332–349 (SQPAYFEEVFGFEISKVG). The chain crosses the membrane as a helical span at residues 350–370 (MLSAVPHLVMTIIVPIGGQIA). The Cytoplasmic portion of the chain corresponds to 371–386 (DFLRSKQILSTTTVRK). Residues 387-407 (IMNCGGFGMEATLLLVVGYSH) form a helical membrane-spanning segment. At 408–409 (TR) the chain is on the vesicular side. The helical transmembrane segment at 410 to 430 (GVAISFLVLAVGFSGFAISGF) threads the bilayer. Topologically, residues 431–443 (NVNHLDIAPRYAS) are cytoplasmic. A helical membrane pass occupies residues 444–464 (ILMGISNGVGTLSGMVCPIIV). At 465 to 477 (GAMTKNKSREEWQ) the chain is on the vesicular side. Asparagine 470 is a glycosylation site (N-linked (GlcNAc...) asparagine). A helical transmembrane segment spans residues 478-498 (YVFLIAALVHYGGVIFYAIFA). The Cytoplasmic segment spans residues 499–582 (SGEKQPWADP…YNYKDRDDYS (84 aa)).

The protein belongs to the major facilitator superfamily. Sodium/anion cotransporter family. VGLUT subfamily.

Its subcellular location is the cytoplasmic vesicle. It localises to the secretory vesicle. The protein localises to the synaptic vesicle membrane. The protein resides in the synapse. It is found in the synaptosome. Its subcellular location is the cell membrane. It catalyses the reaction L-glutamate(out) = L-glutamate(in). The catalysed reaction is 3 Na(+)(out) + phosphate(out) = 3 Na(+)(in) + phosphate(in). The enzyme catalyses phosphate(in) = phosphate(out). It carries out the reaction K(+)(in) + H(+)(out) = K(+)(out) + H(+)(in). It catalyses the reaction chloride(in) = chloride(out). Chloride channel activity is allosterically activated by lumenal H(+) and Cl(-) leading to synaptic vesicles acidification. The L-glutamate transport activity is allosterically activated by lumenal H(+) and Cl(-). The allosteric requirement for H(+) efficiently prevents non-vesicular efflux across the plasma membrane. The L-glutamate uniporter activity exhibits a biphasic dependence on chloride concentration. Its function is as follows. Multifunctional transporter that transports L-glutamate as well as multiple ions such as chloride, proton, potassium, sodium and phosphate. At the synaptic vesicle membrane, mainly functions as a uniporter which transports preferentially L-glutamate but also, phosphate from the cytoplasm into synaptic vesicles at presynaptic nerve terminals of excitatory neural cells. The L-glutamate or phosphate uniporter activity is electrogenic and is driven by the proton electrochemical gradient, mainly by the electrical gradient established by the vacuolar H(+)-ATPase across the synaptic vesicle membrane. In addition, functions as a chloride channel that allows a chloride permeation through the synaptic vesicle membrane therefore affects the proton electrochemical gradient and promotes synaptic vesicles acidification. Moreover, functions as a vesicular K(+)/H(+) antiport allowing to maintain the electrical gradient and to decrease chemical gradient and therefore sustain vesicular L-glutamate uptake. The vesicular H(+)/H(+) antiport activity is electroneutral. At the plasma membrane, following exocytosis, functions as a symporter of Na(+) and phosphate from the extracellular space to the cytoplasm allowing synaptic phosphate homeostasis regulation. The symporter activity is driven by an inside negative membrane potential and is electrogenic. Also involved in the regulation of retinal hyaloid vessel regression during postnatal development. May also play a role in the endocrine L-glutamatergic system of other tissues such as pineal gland and pancreas. The polypeptide is Vesicular glutamate transporter 2 (Bos taurus (Bovine)).